Here is a 932-residue protein sequence, read N- to C-terminus: Beta-mannosidase A (932 aa).

The N-terminal stretch at methionine 1–proline 19 is a signal peptide. 9 N-linked (GlcNAc...) asparagine glycosylation sites follow: asparagine 41, asparagine 81, asparagine 94, asparagine 249, asparagine 261, asparagine 284, asparagine 289, asparagine 318, and asparagine 348. Glutamate 480 functions as the Proton donor in the catalytic mechanism. Asparagine 538, asparagine 551, asparagine 609, asparagine 624, asparagine 632, asparagine 659, asparagine 739, and asparagine 791 each carry an N-linked (GlcNAc...) asparagine glycan.

Belongs to the glycosyl hydrolase 2 family. Beta-mannosidase A subfamily. As to quaternary structure, homodimer.

It is found in the secreted. It catalyses the reaction Hydrolysis of terminal, non-reducing beta-D-mannose residues in beta-D-mannosides.. The protein operates within glycan metabolism; N-glycan degradation. In terms of biological role, exoglycosidase that cleaves the single beta-linked mannose residue from the non-reducing end of beta-mannosidic oligosaccharides of various complexity and length. Involved in the degradation of polymeric mannan and galactomannan. In Aspergillus terreus (strain NIH 2624 / FGSC A1156), this protein is Beta-mannosidase A (mndA).